Here is a 405-residue protein sequence, read N- to C-terminus: PP2A regulatory subunit TAP46 (405 aa).

Disordered regions lie at residues 159–189 (ERRG…SEEE) and 352–405 (ATTS…TPCG). The segment covering 165–174 (TKASALSTPV) has biased composition (polar residues). Composition is skewed to acidic residues over residues 176 to 189 (SGED…SEEE) and 367 to 377 (EDEEDDDEDEE). Over residues 378-393 (AVMKARAFDDWKDDNP) the composition is skewed to basic and acidic residues.

The protein belongs to the IGBP1/TAP42 family. Interacts with the 36 kDa catalytic subunit (subunit C) of PP2A. Interacts with PP2A1 and PP2A2. Interacts with PP2A3, PPX1 and FYPP1. Interacts with FYPP3 and ABI5. Interacts with ATPK1/S6K1 and ATPK2/S6K2. Interacts with TIP41L. In terms of processing, phosphorylated by TOR kinase in vitro. Ubiquitous. Highly expressed in seed, and particularly in the embryo.

Involved in the positive regulation of the TOR signaling pathway. Acts as a negative regulator of PP2A catalytic activity. Plays a positive role in the ABA-regulated inhibition of germination, probably throught its interaction with ABI5. This is PP2A regulatory subunit TAP46 from Arabidopsis thaliana (Mouse-ear cress).